Consider the following 305-residue polypeptide: NADH-ubiquinone oxidoreductase chain 1 (305 aa).

8 consecutive transmembrane segments (helical) span residues 3–23 (WVAVIVSIIPFVGVLLAVGFY), 71–91 (VGPFILAPALMLAISLLGWLL), 99–119 (VFYVFGVILFMVITSVSVYGV), 145–165 (YEIPMGFIFFCVVLCSGVFMF), 175–195 (LFFFFLPLCVVMLVWMLCMLA), 221–241 (GGGFAVMFIAEYSSILLSSVM), 246–266 (FFGGNEALVGFFMMVFAIFFV), and 285–305 (WTVLLCVMLTASVCVVVLVGV).

This sequence belongs to the complex I subunit 1 family.

It is found in the mitochondrion inner membrane. The catalysed reaction is a ubiquinone + NADH + 5 H(+)(in) = a ubiquinol + NAD(+) + 4 H(+)(out). Core subunit of the mitochondrial membrane respiratory chain NADH dehydrogenase (Complex I) that is believed to belong to the minimal assembly required for catalysis. Complex I functions in the transfer of electrons from NADH to the respiratory chain. The immediate electron acceptor for the enzyme is believed to be ubiquinone. The sequence is that of NADH-ubiquinone oxidoreductase chain 1 (ND1) from Mytilus edulis (Blue mussel).